Reading from the N-terminus, the 364-residue chain is tRNA 2-selenouridine synthase (364 aa).

A Rhodanese domain is found at 14 to 137 (LIADTPIIDV…LRQTAIQATI (124 aa)). Catalysis depends on C97, which acts as the S-selanylcysteine intermediate.

The protein belongs to the SelU family. In terms of assembly, monomer.

The enzyme catalyses 5-methylaminomethyl-2-thiouridine(34) in tRNA + selenophosphate + (2E)-geranyl diphosphate + H2O + H(+) = 5-methylaminomethyl-2-selenouridine(34) in tRNA + (2E)-thiogeraniol + phosphate + diphosphate. It catalyses the reaction 5-methylaminomethyl-2-thiouridine(34) in tRNA + (2E)-geranyl diphosphate = 5-methylaminomethyl-S-(2E)-geranyl-thiouridine(34) in tRNA + diphosphate. It carries out the reaction 5-methylaminomethyl-S-(2E)-geranyl-thiouridine(34) in tRNA + selenophosphate + H(+) = 5-methylaminomethyl-2-(Se-phospho)selenouridine(34) in tRNA + (2E)-thiogeraniol. The catalysed reaction is 5-methylaminomethyl-2-(Se-phospho)selenouridine(34) in tRNA + H2O = 5-methylaminomethyl-2-selenouridine(34) in tRNA + phosphate. Involved in the post-transcriptional modification of the uridine at the wobble position (U34) of tRNA(Lys), tRNA(Glu) and tRNA(Gln). Catalyzes the conversion of 2-thiouridine (S2U-RNA) to 2-selenouridine (Se2U-RNA). Acts in a two-step process involving geranylation of 2-thiouridine (S2U) to S-geranyl-2-thiouridine (geS2U) and subsequent selenation of the latter derivative to 2-selenouridine (Se2U) in the tRNA chain. In Shigella flexneri serotype 5b (strain 8401), this protein is tRNA 2-selenouridine synthase.